Here is an 86-residue protein sequence, read N- to C-terminus: Large ribosomal subunit protein bL31 (86 aa).

The protein belongs to the bacterial ribosomal protein bL31 family. Type A subfamily. As to quaternary structure, part of the 50S ribosomal subunit.

Binds the 23S rRNA. The sequence is that of Large ribosomal subunit protein bL31 from Parasynechococcus marenigrum (strain WH8102).